The following is a 400-amino-acid chain: Nicotinate phosphoribosyltransferase (400 aa).

A Phosphohistidine; by autocatalysis modification is found at His-220.

This sequence belongs to the NAPRTase family. Transiently phosphorylated on a His residue during the reaction cycle. Phosphorylation strongly increases the affinity for substrates and increases the rate of nicotinate D-ribonucleotide production. Dephosphorylation regenerates the low-affinity form of the enzyme, leading to product release.

The enzyme catalyses nicotinate + 5-phospho-alpha-D-ribose 1-diphosphate + ATP + H2O = nicotinate beta-D-ribonucleotide + ADP + phosphate + diphosphate. Its pathway is cofactor biosynthesis; NAD(+) biosynthesis; nicotinate D-ribonucleotide from nicotinate: step 1/1. Catalyzes the synthesis of beta-nicotinate D-ribonucleotide from nicotinate and 5-phospho-D-ribose 1-phosphate at the expense of ATP. The chain is Nicotinate phosphoribosyltransferase from Escherichia coli O7:K1 (strain IAI39 / ExPEC).